A 133-amino-acid chain; its full sequence is T-cell receptor beta chain V region 86T1 (133 aa).

The signal sequence occupies residues 1 to 21 (MSCRLLLYVSLCLVETALMNT). Residues 22–113 (KITQSPRYLI…SAVYFCASSH (92 aa)) are v segment. 2 N-linked (GlcNAc...) asparagine glycosylation sites follow: Asn-36 and Asn-75. Residues Cys-41 and Cys-109 are joined by a disulfide bond. Positions 114 to 133 (GQGVSGNTLYFGEGSRLIVV) are j segment.

This is T-cell receptor beta chain V region 86T1 from Mus musculus (Mouse).